An 861-amino-acid chain; its full sequence is Oleate activated transcription factor 3 (861 aa).

Residues 19–47 (NCKKRKSKCDRTKPCGTCVRLGDVDSCVY) constitute a DNA-binding region (zn(2)-C6 fungal-type). Positions 52 to 61 (SGQPESSPSL) are enriched in polar residues. The disordered stretch occupies residues 52 to 99 (SGQPESSPSLNDADPLRKQSTPAERISPGFIKKRRSSQTRQDEDHWQR).

Belongs to the OAF3 family.

The protein resides in the cytoplasm. The protein localises to the nucleus. Its subcellular location is the mitochondrion. In terms of biological role, transcriptional inhibitor with a significantly increased number of target genes in response to oleate. The polypeptide is Oleate activated transcription factor 3 (OAF3) (Saccharomyces cerevisiae (strain JAY291) (Baker's yeast)).